Consider the following 294-residue polypeptide: Diphthine synthase (294 aa).

S-adenosyl-L-methionine contacts are provided by residues Asp-93, Val-96, 121–122 (SG), Leu-173, and Ala-220.

It belongs to the diphthine synthase family. As to quaternary structure, homodimer.

It carries out the reaction 2-[(3S)-amino-3-carboxypropyl]-L-histidyl-[translation elongation factor 2] + 3 S-adenosyl-L-methionine = diphthine-[translation elongation factor 2] + 3 S-adenosyl-L-homocysteine + 3 H(+). It participates in protein modification; peptidyl-diphthamide biosynthesis. Its function is as follows. S-adenosyl-L-methionine-dependent methyltransferase that catalyzes the trimethylation of the amino group of the modified target histidine residue in translation elongation factor 2 (EF-2), to form an intermediate called diphthine. The three successive methylation reactions represent the second step of diphthamide biosynthesis. The protein is Diphthine synthase (dphB) of Aeropyrum pernix (strain ATCC 700893 / DSM 11879 / JCM 9820 / NBRC 100138 / K1).